We begin with the raw amino-acid sequence, 346 residues long: Dihydroorotase (346 aa).

Zn(2+) is bound by residues H14 and H16. Residues 16–18 (HLR) and N42 each bind substrate. 3 residues coordinate Zn(2+): K100, H137, and H175. K100 carries the post-translational modification N6-carboxylysine. A substrate-binding site is contributed by H137. Residue L220 participates in substrate binding. Position 248 (D248) interacts with Zn(2+). Residue D248 is part of the active site. Positions 252 and 264 each coordinate substrate.

It belongs to the metallo-dependent hydrolases superfamily. DHOase family. Class II DHOase subfamily. Homodimer. Zn(2+) serves as cofactor.

It catalyses the reaction (S)-dihydroorotate + H2O = N-carbamoyl-L-aspartate + H(+). It functions in the pathway pyrimidine metabolism; UMP biosynthesis via de novo pathway; (S)-dihydroorotate from bicarbonate: step 3/3. Functionally, catalyzes the reversible cyclization of carbamoyl aspartate to dihydroorotate. In Ruegeria sp. (strain TM1040) (Silicibacter sp.), this protein is Dihydroorotase.